The chain runs to 683 residues: Methionine--tRNA ligase (683 aa).

A 'HIGH' region motif is present at residues 14–24 (PYANGSIHLGH). The Zn(2+) site is built by C145, C148, C158, and C161. Residues 331 to 335 (KMSKS) carry the 'KMSKS' region motif. An ATP-binding site is contributed by K334. The disordered stretch occupies residues 545–572 (ASKEDLTASQTDTGAAAPAGNGELAKDP). One can recognise a tRNA-binding domain in the interval 581–683 (TFAAVDLRVA…SGAKPGQRIK (103 aa)).

The protein belongs to the class-I aminoacyl-tRNA synthetase family. MetG type 1 subfamily. In terms of assembly, homodimer. Zn(2+) is required as a cofactor.

The protein resides in the cytoplasm. It catalyses the reaction tRNA(Met) + L-methionine + ATP = L-methionyl-tRNA(Met) + AMP + diphosphate. Is required not only for elongation of protein synthesis but also for the initiation of all mRNA translation through initiator tRNA(fMet) aminoacylation. The chain is Methionine--tRNA ligase from Pseudomonas fluorescens (strain Pf0-1).